Consider the following 313-residue polypeptide: Metal ABC transporter substrate-binding lipoprotein (313 aa).

The N-terminal stretch at 1–23 is a signal peptide; that stretch reads MIEKYKNILITFIALAAIVFLVG. Cys24 is lipidated: N-palmitoyl cysteine. The S-diacylglycerol cysteine moiety is linked to residue Cys24. Positions 71, 143, 209, and 284 each coordinate Zn(2+).

This sequence belongs to the bacterial solute-binding protein 9 family. Lipoprotein receptor antigen (Lrai) subfamily.

It is found in the cell membrane. In terms of biological role, part of an ATP-driven transport system for a metal; probably for manganese. In Lactococcus lactis subsp. lactis (strain IL1403) (Streptococcus lactis), this protein is Metal ABC transporter substrate-binding lipoprotein (mtsA).